Consider the following 34-residue polypeptide: Photosystem II reaction center protein M (34 aa).

A helical transmembrane segment spans residues 7–27 (GFVASLMFILVPAIFLIVLYI).

The protein belongs to the PsbM family. PSII is composed of 1 copy each of membrane proteins PsbA, PsbB, PsbC, PsbD, PsbE, PsbF, PsbH, PsbI, PsbJ, PsbK, PsbL, PsbM, PsbT, PsbX, PsbY, PsbZ, Psb30/Ycf12, peripheral proteins PsbO, CyanoQ (PsbQ), PsbU, PsbV and a large number of cofactors. It forms dimeric complexes.

Its subcellular location is the cellular thylakoid membrane. One of the components of the core complex of photosystem II (PSII). PSII is a light-driven water:plastoquinone oxidoreductase that uses light energy to abstract electrons from H(2)O, generating O(2) and a proton gradient subsequently used for ATP formation. It consists of a core antenna complex that captures photons, and an electron transfer chain that converts photonic excitation into a charge separation. This subunit is found at the monomer-monomer interface. This Synechococcus sp. (strain CC9605) protein is Photosystem II reaction center protein M.